The following is a 404-amino-acid chain: S-adenosylmethionine synthase (404 aa).

Residues 1 to 13 (MSQSRYFFTSESV) show a composition bias toward polar residues. The segment at 1–21 (MSQSRYFFTSESVSEGHPDKV) is disordered. An ATP-binding site is contributed by histidine 17. A Mg(2+)-binding site is contributed by aspartate 19. K(+) is bound at residue glutamate 45. L-methionine is bound by residues glutamate 58 and glutamine 101. A flexible loop region spans residues 101–111 (QSPDINRGVDR). ATP is bound by residues 172-174 (DAK), 245-246 (RF), aspartate 254, 260-261 (RK), alanine 277, and lysine 281. Aspartate 254 lines the L-methionine pocket. L-methionine is bound at residue lysine 285.

This sequence belongs to the AdoMet synthase family. In terms of assembly, homotetramer; dimer of dimers. Mg(2+) serves as cofactor. Requires K(+) as cofactor.

It is found in the cytoplasm. The catalysed reaction is L-methionine + ATP + H2O = S-adenosyl-L-methionine + phosphate + diphosphate. The protein operates within amino-acid biosynthesis; S-adenosyl-L-methionine biosynthesis; S-adenosyl-L-methionine from L-methionine: step 1/1. Its function is as follows. Catalyzes the formation of S-adenosylmethionine (AdoMet) from methionine and ATP. The overall synthetic reaction is composed of two sequential steps, AdoMet formation and the subsequent tripolyphosphate hydrolysis which occurs prior to release of AdoMet from the enzyme. This is S-adenosylmethionine synthase from Chlorobium phaeobacteroides (strain DSM 266 / SMG 266 / 2430).